We begin with the raw amino-acid sequence, 94 residues long: Small ribosomal subunit protein uS17 (94 aa).

It belongs to the universal ribosomal protein uS17 family. Part of the 30S ribosomal subunit.

In terms of biological role, one of the primary rRNA binding proteins, it binds specifically to the 5'-end of 16S ribosomal RNA. In Symbiobacterium thermophilum (strain DSM 24528 / JCM 14929 / IAM 14863 / T), this protein is Small ribosomal subunit protein uS17.